Here is a 545-residue protein sequence, read N- to C-terminus: SLAIN motif-containing protein 1 (545 aa).

A coiled-coil region spans residues 14-53 (TTNGLVANAELEVKKLQELVRKLEKQNEQLRNRASAVSNC). 2 stretches are compositionally biased toward low complexity: residues 268–286 (TTST…SLYS) and 466–481 (IPSS…SGIP). Disordered stretches follow at residues 268-342 (TTST…IRDC) and 461-526 (QGGS…LQPP). A compositionally biased stretch (polar residues) spans 503-522 (STANGSSIPRSKIAQPQRSF).

Belongs to the SLAIN motif-containing family.

The protein resides in the cytoplasm. The protein localises to the cytoskeleton. Its function is as follows. Microtubule plus-end tracking protein that might be involved in the regulation of cytoplasmic microtubule dynamics, microtubule organization and microtubule elongation. The chain is SLAIN motif-containing protein 1 (slain1) from Xenopus tropicalis (Western clawed frog).